The sequence spans 296 residues: 33 kDa chaperonin (296 aa).

2 disulfides stabilise this stretch: C237–C239 and C270–C273.

Belongs to the HSP33 family. Post-translationally, under oxidizing conditions two disulfide bonds are formed involving the reactive cysteines. Under reducing conditions zinc is bound to the reactive cysteines and the protein is inactive.

It localises to the cytoplasm. In terms of biological role, redox regulated molecular chaperone. Protects both thermally unfolding and oxidatively damaged proteins from irreversible aggregation. Plays an important role in the bacterial defense system toward oxidative stress. This chain is 33 kDa chaperonin, found in Acetivibrio thermocellus (strain ATCC 27405 / DSM 1237 / JCM 9322 / NBRC 103400 / NCIMB 10682 / NRRL B-4536 / VPI 7372) (Clostridium thermocellum).